We begin with the raw amino-acid sequence, 341 residues long: tRNA N6-adenosine threonylcarbamoyltransferase (341 aa).

2 residues coordinate Fe cation: His111 and His115. Substrate is bound by residues 134-138 (LVSGG), Asp167, Gly180, and Asn276. A Fe cation-binding site is contributed by Asp304.

This sequence belongs to the KAE1 / TsaD family. Fe(2+) is required as a cofactor.

Its subcellular location is the cytoplasm. The catalysed reaction is L-threonylcarbamoyladenylate + adenosine(37) in tRNA = N(6)-L-threonylcarbamoyladenosine(37) in tRNA + AMP + H(+). In terms of biological role, required for the formation of a threonylcarbamoyl group on adenosine at position 37 (t(6)A37) in tRNAs that read codons beginning with adenine. Is involved in the transfer of the threonylcarbamoyl moiety of threonylcarbamoyl-AMP (TC-AMP) to the N6 group of A37, together with TsaE and TsaB. TsaD likely plays a direct catalytic role in this reaction. The sequence is that of tRNA N6-adenosine threonylcarbamoyltransferase from Pseudomonas aeruginosa (strain LESB58).